The sequence spans 360 residues: Peptide chain release factor 1 (360 aa).

The residue at position 235 (glutamine 235) is an N5-methylglutamine. The disordered stretch occupies residues 281–310; the sequence is AERQRQDAAQAESRRLQVGSGDRSQRIRTY.

It belongs to the prokaryotic/mitochondrial release factor family. Post-translationally, methylated by PrmC. Methylation increases the termination efficiency of RF1.

The protein resides in the cytoplasm. Peptide chain release factor 1 directs the termination of translation in response to the peptide chain termination codons UAG and UAA. The chain is Peptide chain release factor 1 from Stenotrophomonas maltophilia (strain R551-3).